The sequence spans 433 residues: Glutamate--tRNA ligase (433 aa).

The 'HIGH' region signature appears at 10–20 (PSPTGYLHIGG). The 'KMSKS' region signature appears at 211-215 (KMSKR). Lysine 214 provides a ligand contact to ATP.

Belongs to the class-I aminoacyl-tRNA synthetase family. Glutamate--tRNA ligase type 1 subfamily. Monomer.

The protein resides in the cytoplasm. The catalysed reaction is tRNA(Glu) + L-glutamate + ATP = L-glutamyl-tRNA(Glu) + AMP + diphosphate. Functionally, catalyzes the attachment of glutamate to tRNA(Glu) in a two-step reaction: glutamate is first activated by ATP to form Glu-AMP and then transferred to the acceptor end of tRNA(Glu). The polypeptide is Glutamate--tRNA ligase (Akkermansia muciniphila (strain ATCC BAA-835 / DSM 22959 / JCM 33894 / BCRC 81048 / CCUG 64013 / CIP 107961 / Muc)).